The sequence spans 202 residues: MKHRRIAILGGTFNPVHHGHLIMAEQALWQFDLDQVLWMPAGDPPHKPLAPGASKADRLAMVKLAIADHERFACSELEIRRSGRSYTIETLRTLIQEQPNTQWYWIIGVDALRDLPQWYQAEELARLCHWIVAPRVDAGDAAQVLQAVAAKLPIQAQILEAPTLTLSSTYLRQQIQKGGSIRYLVPPAVEHYIRQHRLYLQP.

This sequence belongs to the NadD family.

It carries out the reaction nicotinate beta-D-ribonucleotide + ATP + H(+) = deamido-NAD(+) + diphosphate. Its pathway is cofactor biosynthesis; NAD(+) biosynthesis; deamido-NAD(+) from nicotinate D-ribonucleotide: step 1/1. In terms of biological role, catalyzes the reversible adenylation of nicotinate mononucleotide (NaMN) to nicotinic acid adenine dinucleotide (NaAD). The protein is Probable nicotinate-nucleotide adenylyltransferase of Synechococcus sp. (strain JA-2-3B'a(2-13)) (Cyanobacteria bacterium Yellowstone B-Prime).